A 422-amino-acid polypeptide reads, in one-letter code: Mitochondrial distribution and morphology protein 12 (422 aa).

An SMP-LTD domain is found at 1 to 386 (MSFDINWNQL…WPSWICIDMN (386 aa)). Disordered regions lie at residues 74–134 (GATN…HDLG) and 387–422 (DDGD…THEV). Acidic residues-rich tracts occupy residues 109-130 (FDDD…EYDD) and 387-401 (DDGD…EDSN). Basic and acidic residues predominate over residues 405 to 422 (GDGKDNDGKHGDGPTHEV).

The protein belongs to the MDM12 family. Component of the ER-mitochondria encounter structure (ERMES) or MDM complex, composed of MMM1, MDM10, MDM12 and MDM34. An MMM1 homodimer associates with one molecule of MDM12 on each side in a pairwise head-to-tail manner, and the SMP-LTD domains of MMM1 and MDM12 generate a continuous hydrophobic tunnel for phospholipid trafficking.

It localises to the mitochondrion outer membrane. The protein resides in the endoplasmic reticulum membrane. Component of the ERMES/MDM complex, which serves as a molecular tether to connect the endoplasmic reticulum (ER) and mitochondria. Components of this complex are involved in the control of mitochondrial shape and protein biogenesis, and function in nonvesicular lipid trafficking between the ER and mitochondria. MDM12 is required for the interaction of the ER-resident membrane protein MMM1 and the outer mitochondrial membrane-resident beta-barrel protein MDM10. The MDM12-MMM1 subcomplex functions in the major beta-barrel assembly pathway that is responsible for biogenesis of all mitochondrial outer membrane beta-barrel proteins, and acts in a late step after the SAM complex. The MDM10-MDM12-MMM1 subcomplex further acts in the TOM40-specific pathway after the action of the MDM12-MMM1 complex. Essential for establishing and maintaining the structure of mitochondria and maintenance of mtDNA nucleoids. The protein is Mitochondrial distribution and morphology protein 12 of Candida dubliniensis (strain CD36 / ATCC MYA-646 / CBS 7987 / NCPF 3949 / NRRL Y-17841) (Yeast).